Consider the following 289-residue polypeptide: Proteasome subunit beta (289 aa).

The propeptide at 1–59 (MEHTPRNAGFALPAAYMSTMTSSFIDFLKAEAPDLLPRARVENMPAVPGGGSAFEPPHG) is removed in mature form; by autocatalysis. The Nucleophile role is filled by Thr-60.

It belongs to the peptidase T1B family. As to quaternary structure, the 20S proteasome core is composed of 14 alpha and 14 beta subunits that assemble into four stacked heptameric rings, resulting in a barrel-shaped structure. The two inner rings, each composed of seven catalytic beta subunits, are sandwiched by two outer rings, each composed of seven alpha subunits. The catalytic chamber with the active sites is on the inside of the barrel. Has a gated structure, the ends of the cylinder being occluded by the N-termini of the alpha-subunits. Is capped by the proteasome-associated ATPase, ARC.

It localises to the cytoplasm. The catalysed reaction is Cleavage of peptide bonds with very broad specificity.. It functions in the pathway protein degradation; proteasomal Pup-dependent pathway. With respect to regulation, the formation of the proteasomal ATPase ARC-20S proteasome complex, likely via the docking of the C-termini of ARC into the intersubunit pockets in the alpha-rings, may trigger opening of the gate for substrate entry. Interconversion between the open-gate and close-gate conformations leads to a dynamic regulation of the 20S proteasome proteolysis activity. Its function is as follows. Component of the proteasome core, a large protease complex with broad specificity involved in protein degradation. This Saccharomonospora viridis (strain ATCC 15386 / DSM 43017 / JCM 3036 / CCUG 5913 / NBRC 12207 / NCIMB 9602 / P101) (Thermoactinomyces viridis) protein is Proteasome subunit beta.